Reading from the N-terminus, the 738-residue chain is Catalase-peroxidase (738 aa).

The span at 1 to 13 shows a compositional bias: gly residues; that stretch reads MDGQDIGAGGGCP. A disordered region spans residues 1 to 26; it reads MDGQDIGAGGGCPFSGANTNKGRRSN. The tryptophyl-tyrosyl-methioninium (Trp-Tyr) (with M-252) cross-link spans 98-226; the sequence is WHSAGTYRTA…LAAVQMGLIY (129 aa). H99 functions as the Proton acceptor in the catalytic mechanism. The segment at residues 226–252 is a cross-link (tryptophyl-tyrosyl-methioninium (Tyr-Met) (with W-98)); it reads YVNPEGPDGNPDPIASGRDIRETFARM. H267 is a binding site for heme b.

The protein belongs to the peroxidase family. Peroxidase/catalase subfamily. In terms of assembly, homodimer or homotetramer. It depends on heme b as a cofactor. In terms of processing, formation of the three residue Trp-Tyr-Met cross-link is important for the catalase, but not the peroxidase activity of the enzyme.

It carries out the reaction H2O2 + AH2 = A + 2 H2O. It catalyses the reaction 2 H2O2 = O2 + 2 H2O. In terms of biological role, bifunctional enzyme with both catalase and broad-spectrum peroxidase activity. In Ruegeria sp. (strain TM1040) (Silicibacter sp.), this protein is Catalase-peroxidase.